Consider the following 249-residue polypeptide: DNA repair protein RecO (249 aa).

This sequence belongs to the RecO family.

Functionally, involved in DNA repair and RecF pathway recombination. This Exiguobacterium sibiricum (strain DSM 17290 / CCUG 55495 / CIP 109462 / JCM 13490 / 255-15) protein is DNA repair protein RecO.